We begin with the raw amino-acid sequence, 109 residues long: ATP-dependent Clp protease adapter protein ClpS (109 aa).

A disordered region spans residues 1–20; that stretch reads MAERKQGGQGNGVGSSVVTE.

The protein belongs to the ClpS family. As to quaternary structure, binds to the N-terminal domain of the chaperone ClpA.

In terms of biological role, involved in the modulation of the specificity of the ClpAP-mediated ATP-dependent protein degradation. The sequence is that of ATP-dependent Clp protease adapter protein ClpS from Caulobacter vibrioides (strain NA1000 / CB15N) (Caulobacter crescentus).